Here is a 507-residue protein sequence, read N- to C-terminus: Arabinose import ATP-binding protein AraG (507 aa).

ABC transporter domains follow at residues 14 to 249 (LRFN…MVGR) and 249 to 505 (RDIQ…LPRT). Residue 46–53 (GENGAGKS) participates in ATP binding.

This sequence belongs to the ABC transporter superfamily. Arabinose importer (TC 3.A.1.2.2) family. The complex is composed of two ATP-binding proteins (AraG), two transmembrane proteins (AraH) and a solute-binding protein (AraF).

It is found in the cell inner membrane. The catalysed reaction is L-arabinose(out) + ATP + H2O = L-arabinose(in) + ADP + phosphate + H(+). Part of the ABC transporter complex AraFGH involved in arabinose import. Responsible for energy coupling to the transport system. In Pseudomonas syringae pv. tomato (strain ATCC BAA-871 / DC3000), this protein is Arabinose import ATP-binding protein AraG.